The following is a 219-amino-acid chain: Small ribosomal subunit protein uS5 (219 aa).

The segment covering 1–21 (MTDQNQKANQGNGLQTTNLQA) has biased composition (polar residues). Positions 1-61 (MTDQNQKANQ…NQNRRFQKPA (61 aa)) are disordered. Residues 35 to 47 (GIKKAVSKKEGGG) are compositionally biased toward basic and acidic residues. An S5 DRBM domain is found at 66 to 129 (FEERIVKLKR…KAAHNSLHTI (64 aa)).

The protein belongs to the universal ribosomal protein uS5 family. In terms of assembly, part of the 30S ribosomal subunit. Contacts proteins S4 and S8.

Functionally, with S4 and S12 plays an important role in translational accuracy. Located at the back of the 30S subunit body where it stabilizes the conformation of the head with respect to the body. The sequence is that of Small ribosomal subunit protein uS5 from Mycoplasma pneumoniae (strain ATCC 29342 / M129 / Subtype 1) (Mycoplasmoides pneumoniae).